We begin with the raw amino-acid sequence, 506 residues long: Cytochrome P450 6a2 (506 aa).

Cysteine 451 provides a ligand contact to heme.

The protein belongs to the cytochrome P450 family. Heme serves as cofactor.

The protein resides in the endoplasmic reticulum membrane. The protein localises to the microsome membrane. Its function is as follows. Is involved in the breakdown of synthetic insecticides and may be involved in the metabolism of insect hormones. This Drosophila melanogaster (Fruit fly) protein is Cytochrome P450 6a2 (Cyp6a2).